The chain runs to 306 residues: Pantothenate kinase (306 aa).

91–98 (GSVAVGKS) is an ATP binding site.

This sequence belongs to the prokaryotic pantothenate kinase family.

It is found in the cytoplasm. It catalyses the reaction (R)-pantothenate + ATP = (R)-4'-phosphopantothenate + ADP + H(+). It participates in cofactor biosynthesis; coenzyme A biosynthesis; CoA from (R)-pantothenate: step 1/5. The protein is Pantothenate kinase (coaA) of Streptococcus pyogenes serotype M1.